A 242-amino-acid polypeptide reads, in one-letter code: Lysosomal membrane ascorbate-dependent ferrireductase CYB561A3 (242 aa).

The Cytoplasmic segment spans residues 1-7 (MVSGRFY). Residues 8–28 (LSCLLLGSLGSMCILFTIYWM) traverse the membrane as a helical segment. The Cytochrome b561 domain maps to 12-219 (LLGSLGSMCI…FGLLVLYILL (208 aa)). The Lumenal portion of the chain corresponds to 29-45 (QYWRGGFAWNGSIYMFN). A glycan (N-linked (GlcNAc...) asparagine) is linked at asparagine 38. The helical transmembrane segment at 46–66 (WHPVLMVAGMVVFYGGASLVY) threads the bilayer. Heme b-binding residues include histidine 47 and arginine 67. The Cytoplasmic segment spans residues 67–83 (RLPQSWVGPKLPWKLLH). Positions 76 and 80 each coordinate L-ascorbate. Position 83 (histidine 83) interacts with heme b. Residues 84–104 (AALHLMAFVLTVVGLVAVFTF) traverse the membrane as a helical segment. The Lumenal portion of the chain corresponds to 105–119 (HNHGRTANLYSLHSW). Residues 112–115 (NLYS) and histidine 117 each bind heme b. The helical transmembrane segment at 120-140 (LGITTVFLFACQWFLGFAVFL) threads the bilayer. At 141 to 154 (LPWASMWLRSLLKP) the chain is on the cytoplasmic side. L-ascorbate is bound at residue arginine 149. Residues 155 to 175 (IHVFFGAAILSLSIASVISGI) form a helical membrane-spanning segment. The heme b site is built by histidine 156 and glutamate 177. Residues 176 to 202 (NEKLFFSLKNTTRPYHSLPSEAVFANS) are Lumenal-facing. The chain crosses the membrane as a helical span at residues 203-223 (TGMLVVAFGLLVLYILLASSW). Residue lysine 224 coordinates heme b. Over 224-242 (KRPEPGILTDRQPLLHDGE) the chain is Cytoplasmic.

As to quaternary structure, homodimer. The cofactor is heme b. N-glycosylated.

The protein resides in the late endosome membrane. Its subcellular location is the lysosome membrane. It carries out the reaction Fe(3+)(out) + L-ascorbate(in) = monodehydro-L-ascorbate radical(in) + Fe(2+)(out) + H(+). Transmembrane reductase that uses ascorbate as an electron donor in the cytoplasm and transfers electrons across membranes to reduce iron cations Fe(3+) into Fe(2+) in the lumen of the late endosome and lysosome. Reduced iron can then be extruded from the late endosome and lysosome to the cytoplasm by divalent metal-specific transporters. It is therefore most probably involved in endosomal and lysosomal cellular iron homeostasis. The sequence is that of Lysosomal membrane ascorbate-dependent ferrireductase CYB561A3 from Homo sapiens (Human).